A 207-amino-acid chain; its full sequence is Holliday junction branch migration complex subunit RuvA (207 aa).

Positions 1-63 (MIDSLHGEVL…DDGIDLYAFE (63 aa)) are domain I. The domain II stretch occupies residues 64–142 (SDEARQMFAM…VFDSGDSASE (79 aa)). The tract at residues 143–154 (PQSGVGGNSEAE) is flexible linker. The domain III stretch occupies residues 155 to 207 (VDSGVVGTVTQALVELGFPEKQAEKTATSAAAEGGSVSEILKRALRSMSSERN).

It belongs to the RuvA family. In terms of assembly, homotetramer. Forms an RuvA(8)-RuvB(12)-Holliday junction (HJ) complex. HJ DNA is sandwiched between 2 RuvA tetramers; dsDNA enters through RuvA and exits via RuvB. An RuvB hexamer assembles on each DNA strand where it exits the tetramer. Each RuvB hexamer is contacted by two RuvA subunits (via domain III) on 2 adjacent RuvB subunits; this complex drives branch migration. In the full resolvosome a probable DNA-RuvA(4)-RuvB(12)-RuvC(2) complex forms which resolves the HJ.

It is found in the cytoplasm. In terms of biological role, the RuvA-RuvB-RuvC complex processes Holliday junction (HJ) DNA during genetic recombination and DNA repair, while the RuvA-RuvB complex plays an important role in the rescue of blocked DNA replication forks via replication fork reversal (RFR). RuvA specifically binds to HJ cruciform DNA, conferring on it an open structure. The RuvB hexamer acts as an ATP-dependent pump, pulling dsDNA into and through the RuvAB complex. HJ branch migration allows RuvC to scan DNA until it finds its consensus sequence, where it cleaves and resolves the cruciform DNA. This chain is Holliday junction branch migration complex subunit RuvA, found in Corynebacterium kroppenstedtii (strain DSM 44385 / JCM 11950 / CIP 105744 / CCUG 35717).